The chain runs to 236 residues: Ribonuclease 3 (236 aa).

Residues 7 to 136 enclose the RNase III domain; the sequence is KSYILKKFNI…FIGALYLDQG (130 aa). Glu49 contacts Mg(2+). Residue Asp53 is part of the active site. Mg(2+)-binding residues include Asp122 and Glu125. The active site involves Glu125. In terms of domain architecture, DRBM spans 162 to 232; sequence DFKSRLQERL…ARAALKILED (71 aa).

This sequence belongs to the ribonuclease III family. In terms of assembly, homodimer. The cofactor is Mg(2+).

The protein resides in the cytoplasm. It carries out the reaction Endonucleolytic cleavage to 5'-phosphomonoester.. In terms of biological role, digests double-stranded RNA. Involved in the processing of primary rRNA transcript to yield the immediate precursors to the large and small rRNAs (23S and 16S). Processes some mRNAs, and tRNAs when they are encoded in the rRNA operon. Processes pre-crRNA and tracrRNA of type II CRISPR loci if present in the organism. In Leuconostoc mesenteroides subsp. mesenteroides (strain ATCC 8293 / DSM 20343 / BCRC 11652 / CCM 1803 / JCM 6124 / NCDO 523 / NBRC 100496 / NCIMB 8023 / NCTC 12954 / NRRL B-1118 / 37Y), this protein is Ribonuclease 3.